Here is a 544-residue protein sequence, read N- to C-terminus: Chaperonin GroEL (544 aa).

ATP is bound by residues 29 to 32 (TLGP), K50, 86 to 90 (DGTTT), G415, and D495.

This sequence belongs to the chaperonin (HSP60) family. In terms of assembly, forms a cylinder of 14 subunits composed of two heptameric rings stacked back-to-back. Interacts with the co-chaperonin GroES.

It is found in the cytoplasm. It catalyses the reaction ATP + H2O + a folded polypeptide = ADP + phosphate + an unfolded polypeptide.. In terms of biological role, together with its co-chaperonin GroES, plays an essential role in assisting protein folding. The GroEL-GroES system forms a nano-cage that allows encapsulation of the non-native substrate proteins and provides a physical environment optimized to promote and accelerate protein folding. The polypeptide is Chaperonin GroEL (Tannerella forsythia (Bacteroides forsythus)).